Consider the following 518-residue polypeptide: Nif-specific regulatory protein (518 aa).

The region spanning 35–176 is the GAF domain; it reads NTARALAAIL…MVANLISQPL (142 aa). One can recognise a Sigma-54 factor interaction domain in the interval 205–432; it reads VGKSQAMRQT…LENCLERASV (228 aa). ATP-binding positions include 232-239 and 295-304; these read GESGTGKE and ADGGTLFLDE. The tract at residues 433–475 is inter-domain linker; it reads MTDEGLIDRDVILFNHHESPALSVKPGLPLATDESWLDQELDE. A C-terminal DNA-binding domain region spans residues 476 to 518; that stretch reads RQRVIAALEKTGWVQAKAARLLGMTPRQIAYRIQIMDINMHRI. Residues 490 to 509 constitute a DNA-binding region (H-T-H motif); it reads QAKAARLLGMTPRQIAYRIQ.

As to quaternary structure, interacts with sigma-54.

Its function is as follows. Required for activation of most nif operons, which are directly involved in nitrogen fixation. The sequence is that of Nif-specific regulatory protein (nifA) from Enterobacter agglomerans (Erwinia herbicola).